The sequence spans 156 residues: Cell division protein SepF (156 aa).

A disordered region spans residues 15-58 (SDVVPEDEDDEVIDEEPESSFDTDRSVTPIPAASTQPSTSQRKS). Residues 18–35 (VPEDEDDEVIDEEPESSF) show a composition bias toward acidic residues. A compositionally biased stretch (polar residues) spans 47–57 (ASTQPSTSQRK).

This sequence belongs to the SepF family. As to quaternary structure, homodimer. Interacts with FtsZ.

Its subcellular location is the cytoplasm. Functionally, cell division protein that is part of the divisome complex and is recruited early to the Z-ring. Probably stimulates Z-ring formation, perhaps through the cross-linking of FtsZ protofilaments. Its function overlaps with FtsA. This is Cell division protein SepF from Bifidobacterium animalis subsp. lactis (strain AD011).